Reading from the N-terminus, the 83-residue chain is Cell division topological specificity factor (83 aa).

Belongs to the MinE family.

Functionally, prevents the cell division inhibition by proteins MinC and MinD at internal division sites while permitting inhibition at polar sites. This ensures cell division at the proper site by restricting the formation of a division septum at the midpoint of the long axis of the cell. The sequence is that of Cell division topological specificity factor from Alcanivorax borkumensis (strain ATCC 700651 / DSM 11573 / NCIMB 13689 / SK2).